A 359-amino-acid polypeptide reads, in one-letter code: UPF0283 membrane protein R01807 (359 aa).

Helical transmembrane passes span 76-96 (FGKI…GLWI) and 109-129 (WLGY…LIVV).

Belongs to the UPF0283 family.

Its subcellular location is the cell inner membrane. This chain is UPF0283 membrane protein R01807, found in Rhizobium meliloti (strain 1021) (Ensifer meliloti).